The following is a 662-amino-acid chain: Probable protein phosphatase CG10417 (662 aa).

The 542-residue stretch at 23–564 (AVGASSMQGW…DNMTAVIVQF (542 aa)) folds into the PPM-type phosphatase domain. Mn(2+) is bound by residues Asp-57 and Gly-58. Disordered regions lie at residues 219-275 (DGVA…FKHT) and 288-374 (GSND…DEDQ). Composition is skewed to polar residues over residues 238-252 (DSNT…STKN), 261-275 (NDQN…FKHT), and 288-319 (GSND…INSS). Phosphoserine is present on residues Ser-289 and Ser-306. Over residues 320-334 (QDDEFTDDDADYEEN) the composition is skewed to acidic residues. The span at 337 to 347 (VKSPDTSSAES) shows a compositional bias: polar residues. A compositionally biased stretch (acidic residues) spans 349–374 (DCTENDDDGDEDGNEDSDEEETDEDQ). Residues Asp-506 and Asp-555 each coordinate Mn(2+). Residues 591–609 (VSHSLNDQSASKRCASQNA) are compositionally biased toward polar residues. A disordered region spans residues 591–662 (VSHSLNDQSA…KEVTIIVSSS (72 aa)). Residues Ser-592, Ser-594, and Ser-599 each carry the phosphoserine modification. Basic and acidic residues predominate over residues 616-637 (LEKNNSKRLKTDLEQENIKDRT). Thr-637 carries the post-translational modification Phosphothreonine. Phosphoserine occurs at positions 639 and 641.

It belongs to the PP2C family. Mg(2+) is required as a cofactor. The cofactor is Mn(2+).

It carries out the reaction O-phospho-L-seryl-[protein] + H2O = L-seryl-[protein] + phosphate. The enzyme catalyses O-phospho-L-threonyl-[protein] + H2O = L-threonyl-[protein] + phosphate. In Drosophila melanogaster (Fruit fly), this protein is Probable protein phosphatase CG10417.